Here is a 254-residue protein sequence, read N- to C-terminus: Triosephosphate isomerase (254 aa).

Substrate is bound at residue 12–14 (NWK). The Electrophile role is filled by His99. Glu169 acts as the Proton acceptor in catalysis. Residues Gly175, Ser214, and 235–236 (GG) contribute to the substrate site.

The protein belongs to the triosephosphate isomerase family. As to quaternary structure, homodimer.

The protein resides in the cytoplasm. It catalyses the reaction D-glyceraldehyde 3-phosphate = dihydroxyacetone phosphate. The protein operates within carbohydrate biosynthesis; gluconeogenesis. It functions in the pathway carbohydrate degradation; glycolysis; D-glyceraldehyde 3-phosphate from glycerone phosphate: step 1/1. In terms of biological role, involved in the gluconeogenesis. Catalyzes stereospecifically the conversion of dihydroxyacetone phosphate (DHAP) to D-glyceraldehyde-3-phosphate (G3P). The chain is Triosephosphate isomerase from Brucella abortus biovar 1 (strain 9-941).